Here is a 345-residue protein sequence, read N- to C-terminus: S-adenosylmethionine:tRNA ribosyltransferase-isomerase (345 aa).

The protein belongs to the QueA family. Monomer.

It localises to the cytoplasm. It catalyses the reaction 7-aminomethyl-7-carbaguanosine(34) in tRNA + S-adenosyl-L-methionine = epoxyqueuosine(34) in tRNA + adenine + L-methionine + 2 H(+). It functions in the pathway tRNA modification; tRNA-queuosine biosynthesis. Transfers and isomerizes the ribose moiety from AdoMet to the 7-aminomethyl group of 7-deazaguanine (preQ1-tRNA) to give epoxyqueuosine (oQ-tRNA). The chain is S-adenosylmethionine:tRNA ribosyltransferase-isomerase from Shewanella pealeana (strain ATCC 700345 / ANG-SQ1).